The primary structure comprises 141 residues: Hemoglobin subunit alpha (141 aa).

A Globin domain is found at 1–141 (VLSPADKTNV…VSTVLTSKYR (141 aa)). Serine 3 carries the post-translational modification Phosphoserine. N6-succinyllysine is present on lysine 7. Threonine 8 is subject to Phosphothreonine. An N6-succinyllysine modification is found at lysine 11. At lysine 16 the chain carries N6-acetyllysine; alternate. Lysine 16 bears the N6-succinyllysine; alternate mark. Tyrosine 24 carries the post-translational modification Phosphotyrosine. Serine 35 carries the post-translational modification Phosphoserine. Lysine 40 bears the N6-succinyllysine mark. Serine 49 bears the Phosphoserine mark. Histidine 58 is a binding site for O2. Heme b is bound at residue histidine 87. Serine 102 is modified (phosphoserine). A Phosphothreonine modification is found at threonine 108. Residues serine 124 and serine 131 each carry the phosphoserine modification. 2 positions are modified to phosphothreonine: threonine 134 and threonine 137. The residue at position 138 (serine 138) is a Phosphoserine.

It belongs to the globin family. As to quaternary structure, heterotetramer of two alpha chains and two beta chains. As to expression, red blood cells.

Its function is as follows. Involved in oxygen transport from the lung to the various peripheral tissues. Hemopressin acts as an antagonist peptide of the cannabinoid receptor CNR1. Hemopressin-binding efficiently blocks cannabinoid receptor CNR1 and subsequent signaling. The chain is Hemoglobin subunit alpha (HBA) from Cebus capucinus (White-faced sapajou).